The sequence spans 622 residues: MALRGTLRPLKVRRRREMLPQQVGFVCAVLALVCCASGLFGSLGHKTASASKRVLPDTWRNRKLMAPVNGTQTAKNCTDPAIHEFPTDLFSNKERQHGAVLLHILGALYMFYALAIVCDDFFVPSLEKICERLHLSEDVAGATFMAAGSSTPELFASVIGVFITHGDVGVGTIVGSAVFNILCIIGVCGLFAGQVVRLTWWAVCRDSVYYTISVIVLIVFIYDEQIVWWEGLVLIILYVFYILIMKYNVKMQAFFTVKQKSIANGNPVNSELEAGNDFYDGSYDDPSVPLLGQVKEKPQYGKNPVVMVDEIMSSSPPKFTFPEAGLRIMITNKFGPRTRLRMASRIIINERQRLINSANGVSSKPLQNGRHENIENGNVPVENPEDPQQNQEQQPPPQPPPPEPEPVEADFLSPFSVPEARGDKVKWVFTWPLIFLLCVTIPNCSKPRWEKFFMVTFITATLWIAVFSYIMVWLVTIIGYTLGIPDVIMGITFLAAGTSVPDCMASLIVARQGLGDMAVSNTIGSNVFDILVGLGVPWGLQTMVVNYGSTVKINSRGLVYSVVLLLGSVALTVLGIHLNKWRLDRKLGVYVLVLYAIFLCFSIMIEFNVFTFVNLPMCREDD.

A signal peptide spans 1 to 38; it reads MALRGTLRPLKVRRRREMLPQQVGFVCAVLALVCCASG. The Extracellular portion of the chain corresponds to 39–97; it reads LFGSLGHKTASASKRVLPDTWRNRKLMAPVNGTQTAKNCTDPAIHEFPTDLFSNKERQH. Residues Asn69 and Asn76 are each glycosylated (N-linked (GlcNAc...) asparagine). A helical transmembrane segment spans residues 98–118; the sequence is GAVLLHILGALYMFYALAIVC. At 119–142 the chain is on the cytoplasmic side; it reads DDFFVPSLEKICERLHLSEDVAGA. One copy of the Alpha-1 repeat lies at 139–179; that stretch reads VAGATFMAAGSSTPELFASVIGVFITHGDVGVGTIVGSAVF. The helical transmembrane segment at 143–163 threads the bilayer; it reads TFMAAGSSTPELFASVIGVFI. The Extracellular segment spans residues 164–172; sequence THGDVGVGT. Residues 173-193 traverse the membrane as a helical segment; sequence IVGSAVFNILCIIGVCGLFAG. Over 194 to 200 the chain is Cytoplasmic; the sequence is QVVRLTW. Residues 201–221 traverse the membrane as a helical segment; the sequence is WAVCRDSVYYTISVIVLIVFI. Residues 222-224 lie on the Extracellular side of the membrane; the sequence is YDE. A helical transmembrane segment spans residues 225-245; sequence QIVWWEGLVLIILYVFYILIM. Residues 246-457 are Cytoplasmic-facing; it reads KYNVKMQAFF…RWEKFFMVTF (212 aa). The segment at 358–410 is disordered; sequence ANGVSSKPLQNGRHENIENGNVPVENPEDPQQNQEQQPPPQPPPPEPEPVEAD. A compositionally biased stretch (low complexity) spans 380 to 393; that stretch reads PVENPEDPQQNQEQ. The span at 394-404 shows a compositional bias: pro residues; sequence QPPPQPPPPEP. A helical membrane pass occupies residues 458 to 478; the sequence is ITATLWIAVFSYIMVWLVTII. Position 479 (Gly479) is a topological domain, extracellular. A helical membrane pass occupies residues 480–500; it reads YTLGIPDVIMGITFLAAGTSV. The Alpha-2 repeat unit spans residues 495–526; sequence AAGTSVPDCMASLIVARQGLGDMAVSNTIGSN. At 501 to 526 the chain is on the cytoplasmic side; the sequence is PDCMASLIVARQGLGDMAVSNTIGSN. A helical transmembrane segment spans residues 527–547; it reads VFDILVGLGVPWGLQTMVVNY. Over 548–557 the chain is Extracellular; sequence GSTVKINSRG. Residues 558–578 traverse the membrane as a helical segment; it reads LVYSVVLLLGSVALTVLGIHL. Over 579-586 the chain is Cytoplasmic; the sequence is NKWRLDRK. Residues 587 to 607 traverse the membrane as a helical segment; the sequence is LGVYVLVLYAIFLCFSIMIEF. Residues 608-622 lie on the Extracellular side of the membrane; that stretch reads NVFTFVNLPMCREDD.

This sequence belongs to the Ca(2+):cation antiporter (CaCA) (TC 2.A.19) family. SLC24A subfamily. In terms of tissue distribution, expressed abundantly in all regions of the brain, aorta, lung and thymus. Expressed at lower levels in the stomach and intestine.

The protein resides in the cell membrane. Its subcellular location is the cytoplasm. It catalyses the reaction Ca(2+)(out) + K(+)(out) + 4 Na(+)(in) = Ca(2+)(in) + K(+)(in) + 4 Na(+)(out). In terms of biological role, calcium, potassium:sodium antiporter that transports 1 Ca(2+) and 1 K(+) in exchange for 4 Na(+). Controls the rapid response termination and proper regulation of adaptation in olfactory sensory neurons (OSNs) which subsequently influences how odor information is encoded and perceived. May play a role in calcium transport during amelogenesis. This Homo sapiens (Human) protein is Sodium/potassium/calcium exchanger 4.